The sequence spans 950 residues: Translation initiation factor IF-2 (950 aa).

2 disordered regions span residues 69-92 (KTKT…AGKA) and 128-352 (KPKV…SNVP). Basic and acidic residues-rich tracts occupy residues 77 to 86 (AKSKQEDHPR), 128 to 158 (KPKV…EAKA), 165 to 186 (AEVK…EKKK), 200 to 234 (KRAE…DNRR), and 291 to 312 (NRRD…DGNR). Composition is skewed to polar residues over residues 322 to 336 (NRNQ…NWNQ) and 343 to 352 (YQNNQSSNVP). In terms of domain architecture, tr-type G spans 448–619 (ERPAVVTIMG…LLVAEVQELK (172 aa)). The G1 stretch occupies residues 457–464 (GHVDHGKT). 457–464 (GHVDHGKT) provides a ligand contact to GTP. A G2 region spans residues 482–486 (GITQH). The G3 stretch occupies residues 503-506 (DTPG). GTP is bound by residues 503 to 507 (DTPGH) and 557 to 560 (NKID). The tract at residues 557 to 560 (NKID) is G4. The segment at 595 to 597 (SAK) is G5.

It belongs to the TRAFAC class translation factor GTPase superfamily. Classic translation factor GTPase family. IF-2 subfamily.

It is found in the cytoplasm. Functionally, one of the essential components for the initiation of protein synthesis. Protects formylmethionyl-tRNA from spontaneous hydrolysis and promotes its binding to the 30S ribosomal subunits. Also involved in the hydrolysis of GTP during the formation of the 70S ribosomal complex. The sequence is that of Translation initiation factor IF-2 from Lactococcus lactis subsp. cremoris (strain SK11).